We begin with the raw amino-acid sequence, 50 residues long: MKQHKAMIVALIVICITAVVAALVTRKDLCEVHIRTGQTEVAVFTAYESE.

At 1–5 (MKQHK) the chain is on the cytoplasmic side. The helical; Signal-anchor for type II membrane protein transmembrane segment at 6–24 (AMIVALIVICITAVVAALV) threads the bilayer. Residues 25 to 50 (TRKDLCEVHIRTGQTEVAVFTAYESE) lie on the Periplasmic side of the membrane.

The protein belongs to the Hok/Gef family. Homodimer; disulfide-linked.

It localises to the cell inner membrane. Its function is as follows. Toxic component of a type I toxin-antitoxin (TA) system. When overexpressed kills cells within minutes; causes collapse of the transmembrane potential and arrest of respiration. Its toxic effect is probably neutralized by antisense antitoxin RNA SokC. The polypeptide is Toxic protein HokC (Escherichia coli (strain K12)).